A 314-amino-acid polypeptide reads, in one-letter code: N-alpha-acetyltransferase 80 (314 aa).

The 154-residue stretch at 90–243 (LEPVHCRPEL…TTVLRAFSKP (154 aa)) folds into the N-acetyltransferase domain. Substrate is bound by residues Arg113 and 118–121 (RLHS). Residues 169–171 (VVV), 177–182 (GRGFGR), and Gln207 contribute to the acetyl-CoA site. Positions 260–295 (VPRSSKGPPLPPPPPLPQSLTASPPPSPEPLPQSPL) are disordered. The segment covering 267–292 (PPLPPPPPLPQSLTASPPPSPEPLPQ) has biased composition (pro residues).

This sequence belongs to the acetyltransferase family.

It is found in the cytoplasm. Its subcellular location is the cytosol. It catalyses the reaction N-terminal L-aspartyl-L-aspartyl-L-aspartyl-[protein] + acetyl-CoA = N-terminal N-acetyl-L-aspartyl-L-aspartyl-L-aspartyl-[protein] + CoA + H(+). It carries out the reaction N-terminal L-glutamyl-L-glutamyl-L-glutamyl-[protein] + acetyl-CoA = N-terminal N-acetyl-L-glutamyl-L-glutamyl-L-glutamyl-[protein] + CoA + H(+). Its function is as follows. N-alpha-acetyltransferase that specifically mediates the acetylation of the acidic amino terminus of processed forms of beta- and gamma-actin (ACTB and ACTG, respectively). N-terminal acetylation of processed beta- and gamma-actin regulates actin filament depolymerization and elongation. In vivo, preferentially displays N-terminal acetyltransferase activity towards acid N-terminal sequences starting with Asp-Asp-Asp and Glu-Glu-Glu. In vitro, shows high activity towards Met-Asp-Glu-Leu and Met-Asp-Asp-Asp. May act as a tumor suppressor. This Mus musculus (Mouse) protein is N-alpha-acetyltransferase 80.